Here is a 458-residue protein sequence, read N- to C-terminus: UDP-N-acetylmuramate--L-alanine ligase (458 aa).

112–118 (GMHGKTT) contacts ATP.

This sequence belongs to the MurCDEF family.

The protein localises to the cytoplasm. The enzyme catalyses UDP-N-acetyl-alpha-D-muramate + L-alanine + ATP = UDP-N-acetyl-alpha-D-muramoyl-L-alanine + ADP + phosphate + H(+). Its pathway is cell wall biogenesis; peptidoglycan biosynthesis. Cell wall formation. This is UDP-N-acetylmuramate--L-alanine ligase from Acidobacterium capsulatum (strain ATCC 51196 / DSM 11244 / BCRC 80197 / JCM 7670 / NBRC 15755 / NCIMB 13165 / 161).